We begin with the raw amino-acid sequence, 583 residues long: MSSLSVRFLSPPLFSSTPAWPRTGLAATQAVPPVVAEVDAGRLEPRVEEREGYWVLKEKFREGINPQEKLKLEREPMKLFMEGGIEDLAKMSLEEIDKDKISKSDIDVRLKWLGLFHRRKHHYGRFMMRLKLPNGVTTSAQTRYLASVIRKYGKDGCADVTTRQNWQIRGVVLSDVPEILKGLDEVGLTSLQSGMDNVRNPVGNPLAGIDIHEIVATRPYNNLLSQFITANSRGNLAFTNLPRKWNVCVVGSHDLFEHPHINDLAYMPAIKDGRFGFNLLVGGFFSPRRCAEAVPLDAWVSADDIILVCKAILEAYRDLGTRGNRQKTRMMWLIDELGIEGFRSEVVKRMPNQELERAAPEDLIEKQWERRELIGVHPQKQEGLSYVGLHIPVGRVQADDMDELARLADTYGCGELRLTVEQNIIIPNIENSKLEALLGEPLLKDRFSPEPPILMKGLVACTGNQFCGQAIIETKARALKVTEEVQRQVAVTRPVRMHWTGCPNSCGQVQVADIGFMGCMARDENGKPCEGAAVFLGGRIGSDSHLGNLYKKGVPCKNLVPLVVDILVKHFGAVPREREESED.

Residues 1–22 (MSSLSVRFLSPPLFSSTPAWPR) constitute a chloroplast transit peptide. Positions 461, 467, 502, and 506 each coordinate [4Fe-4S] cluster. C506 is a siroheme binding site.

Belongs to the nitrite and sulfite reductase 4Fe-4S domain family. As to quaternary structure, monomer. The cofactor is siroheme. Requires [4Fe-4S] cluster as cofactor.

The protein resides in the plastid. Its subcellular location is the chloroplast. It carries out the reaction 6 oxidized [2Fe-2S]-[ferredoxin] + NH4(+) + 2 H2O = nitrite + 6 reduced [2Fe-2S]-[ferredoxin] + 8 H(+). It participates in nitrogen metabolism; nitrate reduction (assimilation). The sequence is that of Ferredoxin--nitrite reductase, chloroplastic (NIR1) from Betula pendula (European white birch).